A 603-amino-acid chain; its full sequence is Aquaporin-2 (603 aa).

The chain crosses the membrane as a helical span at residues 40–70 (SLKKYKYNLFFEFIGSFLFVFFISIYMLNSN). Composition is skewed to basic and acidic residues over residues 135-149 (NNKSKREVERDDDKI) and 156-190 (EFEKDNEKKKNYDNINEKEISTTSDGKIKDMEDPK). Residues 135–200 (NNKSKREVER…NISNKNENYD (66 aa)) form a disordered region. Polar residues predominate over residues 191-200 (NISNKNENYD). The next 5 membrane-spanning stretches (helical) occupy residues 282-299 (HAIYSFVGCFIYVIFILL), 321-346 (FALSTLYITFQYFGGIVASIICAHLY), 360-393 (IIKTFLCEFISTFLITLLLLSLYNYKKKFMEENK), 442-471 (NKYIKYIMNHIFYLLFIFFSLLFFVFVTNT), and 509-542 (ITKIFQLLIFYIQSLPLWIGPYFGSAFAATFLSL).

Belongs to the MIP/aquaporin (TC 1.A.8) family.

It is found in the endomembrane system. The catalysed reaction is H2O(in) = H2O(out). The enzyme catalyses glycerol(in) = glycerol(out). Functionally, required for sporozoite development in the mosquito vector. In Plasmodium falciparum (isolate NF54), this protein is Aquaporin-2.